Here is a 175-residue protein sequence, read N- to C-terminus: MDIAIHHPWIRRPFFPFHSPSRLFDQFFGEHLLESDLFPTSTSLSPFYLRPPSFLRAPSWFDTGLSEMRLEKDRFSVNLDVKHFSPEELKVKVLGDVIEVHGKHEERQDEHGFISREFHRKYRIPADVDPLTITSSLSSDGVLTVNGPRKQVSGPERTIPITREEKPAVTAAPKK.

At Met1 the chain carries N-acetylmethionine. A Phosphoserine modification is found at Ser19. Residue Ser41 is glycosylated (O-linked (GlcNAc) serine). Ser45 and Ser59 each carry phosphoserine. Positions 56–164 (RAPSWFDTGL…PERTIPITRE (109 aa)) constitute a sHSP domain. Residue His83 participates in Zn(2+) binding. Lys92 is subject to N6-acetyllysine; partial. Zn(2+) is bound by residues His104, Glu106, His111, and His119. Residues 146-175 (NGPRKQVSGPERTIPITREEKPAVTAAPKK) form a disordered region. At Lys166 the chain carries N6-acetyllysine. Residue Thr170 is glycosylated (O-linked (GlcNAc) threonine).

This sequence belongs to the small heat shock protein (HSP20) family. As to quaternary structure, heteromer composed of three CRYAA and one CRYAB subunits. Aggregates with homologous proteins, including the small heat shock protein HSPB1, to form large heteromeric complexes. Inter-subunit bridging via zinc ions enhances stability, which is crucial as there is no protein turn over in the lens. Interacts with HSPBAP1 and TTN/titin. Interacts with TMEM109; in the cellular response to DNA damage. Interacts with DES; binds rapidly during early stages of DES filament assembly and a reduced binding seen in the later stages. Interacts with TMED10; the interaction mediates the translocation from the cytoplasm into the ERGIC (endoplasmic reticulum-Golgi intermediate compartment) and thereby secretion. Interacts with ATP6V1A and with MTOR, forming a ternary complex. As to expression, lens as well as other tissues. Expressed in myocardial tissue.

The protein resides in the cytoplasm. Its subcellular location is the nucleus. It is found in the secreted. The protein localises to the lysosome. In terms of biological role, may contribute to the transparency and refractive index of the lens. Has chaperone-like activity, preventing aggregation of various proteins under a wide range of stress conditions. In lens epithelial cells, stabilizes the ATP6V1A protein, preventing its degradation by the proteasome. The polypeptide is Alpha-crystallin B chain (Homo sapiens (Human)).